An 86-amino-acid chain; its full sequence is Neurotoxin E1x (86 aa).

An N-terminal signal peptide occupies residues 1 to 19 (MNSLLMITACLVVIGTVWA). The region spanning 20–84 (KEGYLVDVKG…TWPLPNKTCG (65 aa)) is the LCN-type CS-alpha/beta domain. 4 disulfide bridges follow: cysteine 30–cysteine 83, cysteine 34–cysteine 59, cysteine 43–cysteine 64, and cysteine 47–cysteine 66. Cysteine 83 bears the Cysteine amide mark.

Belongs to the long (4 C-C) scorpion toxin superfamily. Sodium channel inhibitor family. Beta subfamily. As to expression, expressed by the venom gland.

Its subcellular location is the secreted. Its function is as follows. Binds to sodium channels (Nav) and inhibits the inactivation of the activated channels, thereby blocking neuronal transmission. The sequence is that of Neurotoxin E1x from Centruroides sculpturatus (Arizona bark scorpion).